The primary structure comprises 127 residues: Large ribosomal subunit protein bL17 (127 aa).

The protein belongs to the bacterial ribosomal protein bL17 family. As to quaternary structure, part of the 50S ribosomal subunit. Contacts protein L32.

This Haemophilus ducreyi (strain 35000HP / ATCC 700724) protein is Large ribosomal subunit protein bL17.